Here is a 351-residue protein sequence, read N- to C-terminus: Sulfate/thiosulfate import ATP-binding protein CysA (351 aa).

An ABC transporter domain is found at 3 to 237 (ITVRNLHKRF…PRSAFVYEFL (235 aa)). 35 to 42 (GPSGCGKT) is an ATP binding site.

This sequence belongs to the ABC transporter superfamily. Sulfate/tungstate importer (TC 3.A.1.6) family. The complex is composed of two ATP-binding proteins (CysA), two transmembrane proteins (CysT and CysW) and a solute-binding protein (CysP).

It localises to the cell inner membrane. It carries out the reaction sulfate(out) + ATP + H2O = sulfate(in) + ADP + phosphate + H(+). It catalyses the reaction thiosulfate(out) + ATP + H2O = thiosulfate(in) + ADP + phosphate + H(+). Functionally, part of the ABC transporter complex CysAWTP involved in sulfate/thiosulfate import. Responsible for energy coupling to the transport system. This Burkholderia mallei (strain ATCC 23344) protein is Sulfate/thiosulfate import ATP-binding protein CysA.